The primary structure comprises 244 residues: Ureidoacrylate amidohydrolase RutB (244 aa).

D38 serves as the catalytic Proton acceptor. K147 is an active-site residue. Catalysis depends on C180, which acts as the Nucleophile.

The protein belongs to the isochorismatase family. RutB subfamily.

It carries out the reaction (Z)-3-ureidoacrylate + H2O + H(+) = (Z)-3-aminoacrylate + NH4(+) + CO2. It catalyses the reaction (Z)-3-ureidoacrylate + H2O = (Z)-3-aminoacrylate + carbamate + H(+). The enzyme catalyses (Z)-2-methylureidoacrylate + H2O + H(+) = (Z)-2-methylaminoacrylate + NH4(+) + CO2. Its function is as follows. Hydrolyzes ureidoacrylate to form aminoacrylate and carbamate. The carbamate hydrolyzes spontaneously, thereby releasing one of the nitrogen atoms of the pyrimidine ring as ammonia and one of its carbon atoms as CO2. This is Ureidoacrylate amidohydrolase RutB from Escherichia coli O6:H1 (strain CFT073 / ATCC 700928 / UPEC).